We begin with the raw amino-acid sequence, 172 residues long: Methylated-DNA--protein-cysteine methyltransferase (172 aa).

Cysteine 142 (nucleophile; methyl group acceptor) is an active-site residue.

This sequence belongs to the MGMT family.

The protein localises to the cytoplasm. The catalysed reaction is a 6-O-methyl-2'-deoxyguanosine in DNA + L-cysteinyl-[protein] = S-methyl-L-cysteinyl-[protein] + a 2'-deoxyguanosine in DNA. It catalyses the reaction a 4-O-methyl-thymidine in DNA + L-cysteinyl-[protein] = a thymidine in DNA + S-methyl-L-cysteinyl-[protein]. Involved in the cellular defense against the biological effects of O6-methylguanine (O6-MeG) and O4-methylthymine (O4-MeT) in DNA. Repairs the methylated nucleobase in DNA by stoichiometrically transferring the methyl group to a cysteine residue in the enzyme. This is a suicide reaction: the enzyme is irreversibly inactivated. This Pyrococcus abyssi (strain GE5 / Orsay) protein is Methylated-DNA--protein-cysteine methyltransferase.